A 306-amino-acid chain; its full sequence is Aspartate carbamoyltransferase catalytic subunit (306 aa).

Residues Arg56 and Thr57 each coordinate carbamoyl phosphate. L-aspartate is bound at residue Lys84. Carbamoyl phosphate is bound by residues Arg106, His134, and Gln137. L-aspartate is bound by residues Arg167 and Arg221. Positions 262 and 263 each coordinate carbamoyl phosphate.

Belongs to the aspartate/ornithine carbamoyltransferase superfamily. ATCase family. As to quaternary structure, heterododecamer (2C3:3R2) of six catalytic PyrB chains organized as two trimers (C3), and six regulatory PyrI chains organized as three dimers (R2).

It carries out the reaction carbamoyl phosphate + L-aspartate = N-carbamoyl-L-aspartate + phosphate + H(+). Its pathway is pyrimidine metabolism; UMP biosynthesis via de novo pathway; (S)-dihydroorotate from bicarbonate: step 2/3. Catalyzes the condensation of carbamoyl phosphate and aspartate to form carbamoyl aspartate and inorganic phosphate, the committed step in the de novo pyrimidine nucleotide biosynthesis pathway. This Desulforudis audaxviator (strain MP104C) protein is Aspartate carbamoyltransferase catalytic subunit.